We begin with the raw amino-acid sequence, 501 residues long: NADH-quinone oxidoreductase subunit N (501 aa).

Transmembrane regions (helical) follow at residues histidine 4–valine 24, phenylalanine 34–leucine 54, leucine 80–glycine 100, glycine 112–glycine 132, leucine 134–phenylalanine 154, leucine 167–methionine 187, proline 207–phenylalanine 227, proline 241–tyrosine 261, leucine 278–alanine 298, valine 314–leucine 334, histidine 335–tryptophan 355, methionine 376–phenylalanine 396, glycine 409–phenylalanine 429, and proline 463–phenylalanine 483.

This sequence belongs to the complex I subunit 2 family. As to quaternary structure, NDH-1 is composed of 14 different subunits. Subunits NuoA, H, J, K, L, M, N constitute the membrane sector of the complex.

It localises to the cell membrane. The enzyme catalyses a quinone + NADH + 5 H(+)(in) = a quinol + NAD(+) + 4 H(+)(out). In terms of biological role, NDH-1 shuttles electrons from NADH, via FMN and iron-sulfur (Fe-S) centers, to quinones in the respiratory chain. The immediate electron acceptor for the enzyme in this species is believed to be a menaquinone. Couples the redox reaction to proton translocation (for every two electrons transferred, four hydrogen ions are translocated across the cytoplasmic membrane), and thus conserves the redox energy in a proton gradient. The protein is NADH-quinone oxidoreductase subunit N of Desulforudis audaxviator (strain MP104C).